The chain runs to 344 residues: Anthranilate phosphoribosyltransferase (344 aa).

5-phospho-alpha-D-ribose 1-diphosphate contacts are provided by residues Gly-84, 87–88, Thr-92, 94–97, 112–120, and Ser-124; these read GD, NIST, and KHGGRSVSS. Residue Gly-84 participates in anthranilate binding. Ser-96 contacts Mg(2+). Position 170 (Arg-170) interacts with anthranilate. Asp-229 and Glu-230 together coordinate Mg(2+).

This sequence belongs to the anthranilate phosphoribosyltransferase family. In terms of assembly, homodimer. The cofactor is Mg(2+).

It catalyses the reaction N-(5-phospho-beta-D-ribosyl)anthranilate + diphosphate = 5-phospho-alpha-D-ribose 1-diphosphate + anthranilate. The protein operates within amino-acid biosynthesis; L-tryptophan biosynthesis; L-tryptophan from chorismate: step 2/5. Catalyzes the transfer of the phosphoribosyl group of 5-phosphorylribose-1-pyrophosphate (PRPP) to anthranilate to yield N-(5'-phosphoribosyl)-anthranilate (PRA). This Janthinobacterium sp. (strain Marseille) (Minibacterium massiliensis) protein is Anthranilate phosphoribosyltransferase.